Here is a 456-residue protein sequence, read N- to C-terminus: Hydroxyproline dehydrogenase (456 aa).

Lysine 310 and lysine 320 each carry N6-acetyllysine.

It belongs to the proline oxidase family. The cofactor is FAD.

It catalyses the reaction trans-4-hydroxy-L-proline + a quinone = (3R,5S)-1-pyrroline-3-hydroxy-5-carboxylate + a quinol + H(+). The enzyme catalyses L-proline + a quinone = (S)-1-pyrroline-5-carboxylate + a quinol + H(+). Dehydrogenase that converts trans-4-L-hydroxyproline to delta-1-pyrroline-3-hydroxy-5-carboxylate (Hyp) using ubiquinone-10 as the terminal electron acceptor. Can also use proline as a substrate but with a very much lower efficiency. Does not react with other diastereomers of Hyp: trans-4-D-hydroxyproline and cis-4-L-hydroxyproline. Ubiquininone analogs such as menadione, duroquinone and ubiquinone-1 react more efficiently than oxygen as the terminal electron acceptor during catalysis. The polypeptide is Hydroxyproline dehydrogenase (Mus musculus (Mouse)).